A 667-amino-acid polypeptide reads, in one-letter code: Acyl-coenzyme A oxidase acox-3 (667 aa).

FAD is bound by residues 138–141 (FCLT), 146–147 (GS), G178, R313, 334–337 (QQYR), and G410. The Proton acceptor role is filled by E433. E435 provides a ligand contact to FAD. Positions 665–667 (SKL) match the Microbody targeting signal motif.

Belongs to the acyl-CoA oxidase family. Homodimer. FAD serves as cofactor. As to expression, expressed in intestine.

The protein localises to the peroxisome. It catalyses the reaction IC-asc-C7-CoA + O2 = IC-asc-DeltaC7-CoA + H2O2. It carries out the reaction IC-asc-C9-CoA + O2 = IC-asc-DeltaC9-CoA + H2O2. The catalysed reaction is asc-C13-CoA + O2 = asc-DeltaC13-CoA + H2O2. Its pathway is lipid metabolism; peroxisomal fatty acid beta-oxidation. Its activity is regulated as follows. In contrast to other acyl-coenzyme A oxidases which bind to and are activated by ATP, does not bind ATP. Functionally, involved in the first step of peroxisomal beta-oxidation by catalyzing the desaturation of fatty acid-derived side chains of ascaroside pheromones, which regulates development and behavior. Specifically, shortens indol-3-carbonyl(IC)-ascarosides with 7-carbon (IC-asc-C7) or 9-carbon (IC-asc-C9) side chains and contributes to the shortening of ascarosides with 13-carbon (asc-C13) and 15-carbon (asc-C15) side chains. This Caenorhabditis elegans protein is Acyl-coenzyme A oxidase acox-3.